A 67-amino-acid chain; its full sequence is Large ribosomal subunit protein uL29 (67 aa).

Belongs to the universal ribosomal protein uL29 family.

The chain is Large ribosomal subunit protein uL29 from Agathobacter rectalis (strain ATCC 33656 / DSM 3377 / JCM 17463 / KCTC 5835 / VPI 0990) (Eubacterium rectale).